Here is a 72-residue protein sequence, read N- to C-terminus: Sec-independent protein translocase protein TatA (72 aa).

A helical membrane pass occupies residues 1–21; the sequence is MPFGLGLPEILVIGVIALLIF. A disordered region spans residues 41–72; that stretch reads KSGVSDEPAPQQSASKETAPNPPQSLPSGKDS.

The protein belongs to the TatA/E family. Forms a complex with TatC.

It is found in the cell inner membrane. Its function is as follows. Part of the twin-arginine translocation (Tat) system that transports large folded proteins containing a characteristic twin-arginine motif in their signal peptide across membranes. TatA could form the protein-conducting channel of the Tat system. The protein is Sec-independent protein translocase protein TatA of Gloeobacter violaceus (strain ATCC 29082 / PCC 7421).